Consider the following 218-residue polypeptide: Small ribosomal subunit protein uS3c (218 aa).

Residues 47–118 (VQKNIRISSG…KLNIAITRIT (72 aa)) enclose the KH type-2 domain.

It belongs to the universal ribosomal protein uS3 family. Part of the 30S ribosomal subunit.

It is found in the plastid. The protein localises to the chloroplast. In Vitis vinifera (Grape), this protein is Small ribosomal subunit protein uS3c (rps3).